A 527-amino-acid chain; its full sequence is MEWIADPSIWAGLITLIVIELVLGIDNLVFIAILAEKLPPKQRDRARVTGLLLAMLMRLLLLASISWLVTLTQPLFSFRSFTFSARDLIMLFGGFFLLFKATMELNERLEGKDSNNPTQRKGAKFWGVVTQIVVLDAIFSLDSVITAVGMVDHLLVMMAAVVIAISLMLMASKPLTQFVNSHPTIVILCLSFLLMIGFSLVAEGFGFVIPKGYLYAAIGFSVMIEALNQLAIFNRRRFLSANQTLRQRTTEAVMRLLSGQKEDAELDAKTASMLVDHGNQQIFNPQERRMIERVLNLNQRTVSSIMTSRHDIEHIDLNAPEEEIRQLLERNQHTRLVVTDGDDAEDLLGVVHVIDLLQQSLRGEPLNLRVLIRQPLVFPETLPLLPALEQFRNARTHFAFVVDEFGSVEGIVTLSDVTETIAGNLPNEVEEIDARHDIQKNADGSWTANGHMPLEDLVQYVPLPLDEKREYHTIAGLLMEYLQRIPKPGEEVQVGDYLLKTLQVESHRVQKVQIIPLRKDGEMEYEV.

Helical transmembrane passes span 14-34 (ITLI…IAIL), 51-71 (LLLA…LVTL), 81-101 (FTFS…LFKA), 122-142 (GAKF…FSLD), 145-165 (ITAV…VIAI), 185-205 (IVIL…AEGF), and 207-227 (FVIP…IEAL). 2 CBS domains span residues 306 to 366 (MTSR…GEPL) and 371 to 429 (LIRQ…PNEV).

The protein belongs to the UPF0053 family.

It localises to the cell membrane. This is UPF0053 protein YegH (yegH) from Shigella flexneri.